A 366-amino-acid polypeptide reads, in one-letter code: MGNYRIAVLPGDGIGKEVTSGAVEVLKAVGIRFGHEFTFEYGLIGGAAIDEAGTPLPEETVRLCRESDAVLLGAVGGPKWDDNPPHLRPEKGLLAIRKQLDLYANLRPVVCYDSLVSRSPLKPDLVQGVDFVIVRELTGGIYFGQPSAVVENGEEKAVDTLLYKKEEIERIVRMAFELARGRRKKVTSVDKANVLSSSRLWREVAEEVANEFPDVTLEHMLVDMRMQLIRAPKQFDVIVTENMFGDILSDEASMLSGSLGMLPSASLSASGPSLYEPVHGSAPDIAGMNKANPIAAILSAAMMLRLSFGLTAEAGGRARVWQALALGSGSRLGQRRPHLSTNEMVEEIKAAVLDYTAIAQIMTVYA.

Residue 77–90 (GPKWDDNPPHLRPE) coordinates NAD(+). Substrate-binding residues include Arg-97, Arg-107, Arg-135, and Asp-223. Residues Asp-223, Asp-246, and Asp-250 each contribute to the Mg(2+) site. 280–292 (GSAPDIAGMNKAN) contacts NAD(+).

It belongs to the isocitrate and isopropylmalate dehydrogenases family. LeuB type 1 subfamily. As to quaternary structure, homodimer. Mg(2+) serves as cofactor. The cofactor is Mn(2+).

It localises to the cytoplasm. The catalysed reaction is (2R,3S)-3-isopropylmalate + NAD(+) = 4-methyl-2-oxopentanoate + CO2 + NADH. The protein operates within amino-acid biosynthesis; L-leucine biosynthesis; L-leucine from 3-methyl-2-oxobutanoate: step 3/4. Its function is as follows. Catalyzes the oxidation of 3-carboxy-2-hydroxy-4-methylpentanoate (3-isopropylmalate) to 3-carboxy-4-methyl-2-oxopentanoate. The product decarboxylates to 4-methyl-2 oxopentanoate. The chain is 3-isopropylmalate dehydrogenase (leuB) from Bacillus caldotenax.